The primary structure comprises 203 residues: Probable proteasome subunit beta type-4 (203 aa).

The protein belongs to the peptidase T1B family. The 26S proteasome consists of a 20S proteasome core and two 19S regulatory subunits. The 20S proteasome core is composed of 28 subunits that are arranged in four stacked rings, resulting in a barrel-shaped structure. The two end rings are each formed by seven alpha subunits, and the two central rings are each formed by seven beta subunits. The catalytic chamber with the active sites is on the inside of the barrel.

It localises to the cytoplasm. The protein localises to the nucleus. Its function is as follows. Non-catalytic component of the proteasome, a multicatalytic proteinase complex which is characterized by its ability to cleave peptides with Arg, Phe, Tyr, Leu, and Glu adjacent to the leaving group at neutral or slightly basic pH. The proteasome has an ATP-dependent proteolytic activity. This Neurospora crassa (strain ATCC 24698 / 74-OR23-1A / CBS 708.71 / DSM 1257 / FGSC 987) protein is Probable proteasome subunit beta type-4 (pcb-4).